A 240-amino-acid chain; its full sequence is RING finger protein 151 (240 aa).

An RING-type zinc finger spans residues 20–58 (CSVCHGVLKRPVRLPCSHIFCKKCILRWLARQKTCPCCR). The TRAF-type zinc-finger motif lies at 101–156 (GHQDSCPFELMVCPNEGCMLRVPRGALDEHRQNCQHGAYHRCSLGCGATLGPVERA).

This Bos taurus (Bovine) protein is RING finger protein 151 (RNF151).